Reading from the N-terminus, the 356-residue chain is INO80 complex subunit B (356 aa).

The tract at residues 1–71 (MSKLWRRGST…PSPAKPQLKL (71 aa)) is disordered. Positions 33-51 (HGVHKKKHKKHKKKHKKKH) are enriched in basic residues. Phosphoserine occurs at positions 97, 99, 127, 130, and 132. The tract at residues 124 to 150 (DEDSNLSPSPLRDLSGGLGGQEEEEEQ) is disordered. Residues 213–245 (LLKREERARKRRLQAARRAEEHKNQTIERLTKT) adopt a coiled-coil conformation. 2 disordered regions span residues 246 to 269 (AATS…AAAP) and 286 to 310 (FPPG…PRCS). The HIT-type zinc-finger motif lies at 305–336 (PPPRCSVPGCPHPRRYACSRTGQALCSLQCYR).

As to quaternary structure, component of the chromatin remodeling INO80 complex; specifically part of a complex module associated with the helicase ATP-binding and the helicase C-terminal domain of INO80. Interacts with RP9.

The protein resides in the nucleus. Its subcellular location is the nucleolus. Its function is as follows. Induces growth and cell cycle arrests at the G1 phase of the cell cycle. Proposed core component of the chromatin remodeling INO80 complex which is involved in transcriptional regulation, DNA replication and probably DNA repair. The protein is INO80 complex subunit B (INO80B) of Homo sapiens (Human).